A 160-amino-acid polypeptide reads, in one-letter code: Large ribosomal subunit protein uL22c (160 aa).

It belongs to the universal ribosomal protein uL22 family. In terms of assembly, part of the 50S ribosomal subunit.

It is found in the plastid. It localises to the chloroplast. This protein binds specifically to 23S rRNA. Its function is as follows. The globular domain of the protein is located near the polypeptide exit tunnel on the outside of the subunit, while an extended beta-hairpin is found that lines the wall of the exit tunnel in the center of the 70S ribosome. In Crucihimalaya wallichii (Rock-cress), this protein is Large ribosomal subunit protein uL22c (rpl22).